The primary structure comprises 138 residues: Large ribosomal subunit protein uL16m (138 aa).

The protein belongs to the universal ribosomal protein uL16 family.

The protein resides in the mitochondrion. In Chondrus crispus (Carrageen Irish moss), this protein is Large ribosomal subunit protein uL16m (RPL16).